The sequence spans 410 residues: Serine proteinase inhibitor A3K (410 aa).

A signal peptide spans 1–24; the sequence is MPSAISRGLLLLAGLCYLVFGIMA. Residues N62, N99, N162, N229, and N263 are each glycosylated (N-linked (GlcNAc...) asparagine). Positions 360-381 are RCL; sequence GTEAAAATVLEATRTARPPRLS.

The protein belongs to the serpin family.

The protein resides in the secreted. It is found in the extracellular space. Functionally, contrapsin inhibits trypsin-like proteases. In Cavia porcellus (Guinea pig), this protein is Serine proteinase inhibitor A3K (SERPINA3K).